A 371-amino-acid chain; its full sequence is MAWTKHQLFLAGLMLVTGSINTLSAKWADNFMAEGCGGSKEHSFQHPFLQAVGMFLGEFSCLAAFYLLRCRATGQSDSSVDPQQPFNPLLFLPPALCDMTGTSLMYVALNMTSASSFQMLRGAVIIFTGLFSVAFLGRRLVLSQWLGILATIAGLVVVGLADLLSKHDSQHKLSEVITGDLLIIMAQIIVAIQMVLEEKFVYKHNVHPLRAVGTEGLFGFVILSLLLVPMYYIPAGSFSGNPRGTLEDALDAFCQVGRQPLIAVALLGNISSIAFFNFAGISVTKELSATTRMVLDSLRTVVIWALSLALGWEAFHALQILGFLILLIGTALYNGLHRPLLGRLSRGRPPAEESEQERLLGGSRTPINDAS.

Residues 1–25 (MAWTKHQLFLAGLMLVTGSINTLSA) form the signal peptide. The next 2 helical transmembrane spans lie at 48-68 (FLQAVGMFLGEFSCLAAFYLL) and 89-109 (LLFLPPALCDMTGTSLMYVAL). The EamA domain maps to 104-160 (LMYVALNMTSASSFQMLRGAVIIFTGLFSVAFLGRRLVLSQWLGILATIAGLVVVGL). A glycan (N-linked (GlcNAc...) asparagine) is linked at N110. 7 helical membrane passes run 117–137 (FQMLRGAVIIFTGLFSVAFLG), 140–160 (LVLSQWLGILATIAGLVVVGL), 176–196 (VITGDLLIIMAQIIVAIQMVL), 216–236 (GLFGFVILSLLLVPMYYIPAG), 261–281 (LIAVALLGNISSIAFFNFAGI), 295–312 (LDSLRTVVIWALSLALGW), and 317–336 (ALQILGFLILLIGTALYNGL). The disordered stretch occupies residues 347–371 (GRPPAEESEQERLLGGSRTPINDAS). T365 bears the Phosphothreonine mark.

Belongs to the SLC35F solute transporter family. Interacts with SLC25A5.

The protein localises to the mitochondrion. It localises to the lysosome membrane. Functionally, involved in the maintenance of mitochondrial membrane potential in pancreatic ductal adenocarcinoma (PDAC) cells. Promotes pancreatic ductal adenocarcinoma (PDAC) cell growth. May play a role as a nucleotide-sugar transporter. The sequence is that of Solute carrier family 35 member F6 (SLC35F6) from Pongo abelii (Sumatran orangutan).